Here is a 171-residue protein sequence, read N- to C-terminus: Ribosome maturation factor RimM (171 aa).

One can recognise a PRC barrel domain in the interval 96–170; it reads AEGEYYYHEI…LVTIHVMEGL (75 aa).

Belongs to the RimM family. As to quaternary structure, binds ribosomal protein uS19.

It is found in the cytoplasm. An accessory protein needed during the final step in the assembly of 30S ribosomal subunit, possibly for assembly of the head region. Essential for efficient processing of 16S rRNA. May be needed both before and after RbfA during the maturation of 16S rRNA. It has affinity for free ribosomal 30S subunits but not for 70S ribosomes. This chain is Ribosome maturation factor RimM, found in Bacillus cereus (strain G9842).